We begin with the raw amino-acid sequence, 804 residues long: DNA gyrase subunit A (804 aa).

The Topo IIA-type catalytic domain maps to 31-495 (IPDVRDGLKP…QSIEYNEEEL (465 aa)). The active-site O-(5'-phospho-DNA)-tyrosine intermediate is tyrosine 119. Residues 522 to 528 (QKRGGKG) carry the GyrA-box motif.

This sequence belongs to the type II topoisomerase GyrA/ParC subunit family. Heterotetramer, composed of two GyrA and two GyrB chains. In the heterotetramer, GyrA contains the active site tyrosine that forms a transient covalent intermediate with DNA, while GyrB binds cofactors and catalyzes ATP hydrolysis.

Its subcellular location is the cytoplasm. The enzyme catalyses ATP-dependent breakage, passage and rejoining of double-stranded DNA.. Its function is as follows. A type II topoisomerase that negatively supercoils closed circular double-stranded (ds) DNA in an ATP-dependent manner to modulate DNA topology and maintain chromosomes in an underwound state. Negative supercoiling favors strand separation, and DNA replication, transcription, recombination and repair, all of which involve strand separation. Also able to catalyze the interconversion of other topological isomers of dsDNA rings, including catenanes and knotted rings. Type II topoisomerases break and join 2 DNA strands simultaneously in an ATP-dependent manner. The polypeptide is DNA gyrase subunit A (Thermotoga maritima (strain ATCC 43589 / DSM 3109 / JCM 10099 / NBRC 100826 / MSB8)).